The primary structure comprises 161 residues: D-amino-acid N-acetyltransferase HPA3 (161 aa).

At Ser2 the chain carries N-acetylserine. In terms of domain architecture, N-acetyltransferase spans 14 to 161; sequence IVVKAIEPKD…DKVLYKRNGY (148 aa). An acetyl-CoA-binding site is contributed by 98–111; the sequence is LYVTERARVKGVGR.

This sequence belongs to the acetyltransferase family. GNAT subfamily. In terms of processing, autoacetylates in an intermolecular reaction.

It is found in the cytoplasm. It localises to the nucleus. It catalyses the reaction a D-alpha-amino acid + acetyl-CoA = an N-acetyl-D-amino acid + CoA + H(+). Its function is as follows. N-acetyltransferase that acts on a wide range of D-amino acids. Catalyzes the N-acetylation through an ordered bi-bi mechanism, in which acetyl-CoA is the first substrate to be bound and CoA is the last product to be liberated. D-amino acids are toxic for the cell and their N-acetylation, preceding removal from cells, plays an important role in detoxification of D-amino acids. In vitro, capable of acetylating histone H4 at 'Lys-8' and polyamines like putrescine, spermidine and spermine. The polypeptide is D-amino-acid N-acetyltransferase HPA3 (Saccharomyces cerevisiae (strain ATCC 204508 / S288c) (Baker's yeast)).